Reading from the N-terminus, the 241-residue chain is tRNA (guanine-N(7)-)-methyltransferase (241 aa).

The span at 1 to 10 shows a compositional bias: polar residues; the sequence is MTESNETPNT. The disordered stretch occupies residues 1-21; sequence MTESNETPNTPEAGDESKHRR. Residues Glu71, Glu96, Asp123, and Asp146 each contribute to the S-adenosyl-L-methionine site. Asp146 is an active-site residue. Residues Lys150, Asp182, and 219–222 each bind substrate; that span reads TKFE.

The protein belongs to the class I-like SAM-binding methyltransferase superfamily. TrmB family.

The enzyme catalyses guanosine(46) in tRNA + S-adenosyl-L-methionine = N(7)-methylguanosine(46) in tRNA + S-adenosyl-L-homocysteine. Its pathway is tRNA modification; N(7)-methylguanine-tRNA biosynthesis. Functionally, catalyzes the formation of N(7)-methylguanine at position 46 (m7G46) in tRNA. This chain is tRNA (guanine-N(7)-)-methyltransferase, found in Pseudomonas fluorescens (strain SBW25).